We begin with the raw amino-acid sequence, 214 residues long: Adenylate kinase (214 aa).

An ATP-binding site is contributed by 10-15; it reads GAGKGT. Positions 30–59 are NMP; the sequence is CTGDMLRAAVKAGSELGLKAKEIMDAGKLV. Residues threonine 31, arginine 36, 57–59, 85–88, and glutamine 92 contribute to the AMP site; these read KLV and GFPR. The interval 122 to 159 is LID; that stretch reads GRRVHAASGRVYHIKFNPPKVEDKDDVTGEELTIRKDD. Residues arginine 123 and 132-133 each bind ATP; that span reads VY. AMP-binding residues include arginine 156 and arginine 167. Arginine 200 is an ATP binding site.

The protein belongs to the adenylate kinase family. In terms of assembly, monomer.

The protein resides in the cytoplasm. It carries out the reaction AMP + ATP = 2 ADP. The protein operates within purine metabolism; AMP biosynthesis via salvage pathway; AMP from ADP: step 1/1. Functionally, catalyzes the reversible transfer of the terminal phosphate group between ATP and AMP. Plays an important role in cellular energy homeostasis and in adenine nucleotide metabolism. This chain is Adenylate kinase, found in Yersinia enterocolitica.